A 163-amino-acid polypeptide reads, in one-letter code: Cyclic pyranopterin monophosphate synthase (163 aa).

Substrate contacts are provided by residues 75-77 (MCH) and 115-116 (ME). The active site involves Asp-130.

Belongs to the MoaC family. As to quaternary structure, homohexamer; trimer of dimers.

The enzyme catalyses (8S)-3',8-cyclo-7,8-dihydroguanosine 5'-triphosphate = cyclic pyranopterin phosphate + diphosphate. It participates in cofactor biosynthesis; molybdopterin biosynthesis. In terms of biological role, catalyzes the conversion of (8S)-3',8-cyclo-7,8-dihydroguanosine 5'-triphosphate to cyclic pyranopterin monophosphate (cPMP). The sequence is that of Cyclic pyranopterin monophosphate synthase from Bacillus pumilus (strain SAFR-032).